The following is a 54-amino-acid chain: Califin-B (54 aa).

Cysteine 25 and cysteine 53 are disulfide-bonded. Leucine amide is present on leucine 36.

The protein belongs to the molluscan ELH family. This protein consists of a large 36-residue subunit, bound by a single disulfide-bond to a small 18-residue subunit.

The protein localises to the secreted. In terms of biological role, injected in sexually mature animals califin B excites LB and LC cells of the abdominal ganglion and cause egg-laying. The sequence is that of Califin-B from Aplysia californica (California sea hare).